We begin with the raw amino-acid sequence, 307 residues long: D-alanine--D-alanine ligase (307 aa).

Residues 110-299 (KQLWKGAGLP…FDVLVGEILL (190 aa)) form the ATP-grasp domain. 136-185 (PVIVKPAHEGSSIGMAKADNTEELGEALVAAEKFDQDVLVEAWVNGPEYT) provides a ligand contact to ATP. The Mg(2+) site is built by Asp-253, Glu-266, and Asn-268.

The protein belongs to the D-alanine--D-alanine ligase family. It depends on Mg(2+) as a cofactor. Mn(2+) serves as cofactor.

It localises to the cytoplasm. It catalyses the reaction 2 D-alanine + ATP = D-alanyl-D-alanine + ADP + phosphate + H(+). Its pathway is cell wall biogenesis; peptidoglycan biosynthesis. In terms of biological role, cell wall formation. The polypeptide is D-alanine--D-alanine ligase (Alcanivorax borkumensis (strain ATCC 700651 / DSM 11573 / NCIMB 13689 / SK2)).